We begin with the raw amino-acid sequence, 305 residues long: Ribosomal protein L11 methyltransferase (305 aa).

4 residues coordinate S-adenosyl-L-methionine: Thr155, Gly176, Asp198, and Asn241.

This sequence belongs to the methyltransferase superfamily. PrmA family.

The protein resides in the cytoplasm. The catalysed reaction is L-lysyl-[protein] + 3 S-adenosyl-L-methionine = N(6),N(6),N(6)-trimethyl-L-lysyl-[protein] + 3 S-adenosyl-L-homocysteine + 3 H(+). Its function is as follows. Methylates ribosomal protein L11. This is Ribosomal protein L11 methyltransferase from Carboxydothermus hydrogenoformans (strain ATCC BAA-161 / DSM 6008 / Z-2901).